A 393-amino-acid chain; its full sequence is Meiotic driver wtf19 (393 aa).

Residues 1 to 98 (MKNKYYPLRS…SSGTADNSST (98 aa)) form a disordered region. Over residues 11–29 (SMDELSAKNDNEIDLEKGP) the composition is skewed to basic and acidic residues. 2 stretches are compositionally biased toward polar residues: residues 57–72 (GANN…STTP) and 89–98 (SSGTADNSST). A run of 8 helical transmembrane segments spans residues 104-124 (AFLS…YLTY), 137-157 (WVYF…LWYF), 167-187 (VTVI…AQCV), 208-228 (CVKV…IGLF), 233-253 (EMMI…FGCV), 269-289 (CTIS…FWTF), 296-316 (LAKV…TMFL), and 332-352 (VLFI…GALI).

The protein belongs to the WTF family. In terms of assembly, homomer. Forms protein aggregates. The two isoforms can interact with each other and with themselves. High sequence similarity is required for their interaction.

It is found in the spore membrane. The protein localises to the vacuole membrane. It localises to the ascus epiplasm. Its subcellular location is the cytoplasm. The protein resides in the endoplasmic reticulum membrane. Promotes unequal transmission of alleles from the parental zygote to progeny spores by acting as poison/antidote system where the poison and antidote proteins are produced from the same locus; the poison component is trans-acting and targets all spores within an ascus whereas the antidote component is spore-specific, leading to poisoning of all progeny that do not inherit the allele. In terms of biological role, localizes isoform 2 to the vacuole thereby facilitating its degradation. Its function is as follows. Forms toxic aggregates that disrupt spore maturation. The polypeptide is Meiotic driver wtf19 (Schizosaccharomyces pombe (strain 972 / ATCC 24843) (Fission yeast)).